The chain runs to 31 residues: Cyclotide cter-C (31 aa).

Positions 1 to 31 (GVPCAESCVWIPCTVTALLGCSCKDKVCYLD) form a cross-link, cyclopeptide (Gly-Asp). 3 cysteine pairs are disulfide-bonded: cysteine 4/cysteine 21, cysteine 8/cysteine 23, and cysteine 13/cysteine 28.

Contains 3 disulfide bonds. In terms of processing, this is a cyclic peptide.

Its function is as follows. Probably participates in a plant defense mechanism. In Clitoria ternatea (Butterfly pea), this protein is Cyclotide cter-C.